Consider the following 99-residue polypeptide: MNTSVDVVTKLIHLQNNVLDIMREVDQYLNSDTPDYTIESLNAPGKQFDFLDEMLTKKLIESNAIVFDEKSKNLKIIHNNINMCLNWCINLITIKHYVQ.

This is an uncharacterized protein from Lepidoptera (butterflies and moths).